The following is a 329-amino-acid chain: Ubiquitin carboxyl-terminal hydrolase isozyme L5 (329 aa).

One can recognise a UCH catalytic domain in the interval glutamate 7–serine 225. An N6-succinyllysine modification is found at lysine 47. Catalysis depends on cysteine 88, which acts as the Nucleophile. At lysine 158 the chain carries N6-acetyllysine. Histidine 164 acts as the Proton donor in catalysis. Lysine 289 is modified (N6-succinyllysine). Residues asparagine 291–lysine 319 form the ULD domain. The interaction with ADRM1 stretch occupies residues valine 313–lysine 329.

This sequence belongs to the peptidase C12 family. In terms of assembly, component of the 19S (PA700) regulatory complex of the 26S proteasome. Interacts with ADRM1 and NFRKB; in vitro ADRM1 and NFRKB compete for interaction with UCHL5. Component of the INO80 complex; specifically part of a complex module associated with N-terminus of INO80.

Its subcellular location is the cytoplasm. The protein resides in the nucleus. The enzyme catalyses Thiol-dependent hydrolysis of ester, thioester, amide, peptide and isopeptide bonds formed by the C-terminal Gly of ubiquitin (a 76-residue protein attached to proteins as an intracellular targeting signal).. With respect to regulation, activated by ADRM1. Inhibited by interaction with NFRKB. Protease that specifically cleaves 'Lys-48'-linked polyubiquitin chains. Deubiquitinating enzyme associated with the 19S regulatory subunit of the 26S proteasome. Putative regulatory component of the INO80 complex; however is inactive in the INO80 complex and is activated by a transient interaction of the INO80 complex with the proteasome via ADRM1. The protein is Ubiquitin carboxyl-terminal hydrolase isozyme L5 (UCHL5) of Homo sapiens (Human).